We begin with the raw amino-acid sequence, 213 residues long: Amelotin (213 aa).

Residues 1–16 (MKTMILLLCLLGSAQS) form the signal peptide. Disordered stretches follow at residues 22 to 43 (NPAS…LPQQ) and 162 to 213 (GAKA…NRTQ). The span at 33–43 (TPGQVTPLPQQ) shows a compositional bias: polar residues. Positions 169-180 (GTTPGHVTTPGV) are enriched in low complexity.

The protein belongs to the amelotin family. Post-translationally, phosphorylated by FAM20C in vitro. O-glycosylated. Specifically expressed in maturation-stage ameloblasts.

It is found in the secreted. Functionally, is a promoter of calcium phosphate mineralization, playing a critical role in the formation of the compact, mineralized, aprismatic enamel surface layer during the maturation stage of amelogenesis. The polypeptide is Amelotin (Amtn) (Mus musculus (Mouse)).